The sequence spans 181 residues: Large ribosomal subunit protein uL5 (181 aa).

The protein belongs to the universal ribosomal protein uL5 family. In terms of assembly, part of the 50S ribosomal subunit; part of the 5S rRNA/L5/L18/L25 subcomplex. Contacts the 5S rRNA and the P site tRNA. Forms a bridge to the 30S subunit in the 70S ribosome.

In terms of biological role, this is one of the proteins that bind and probably mediate the attachment of the 5S RNA into the large ribosomal subunit, where it forms part of the central protuberance. In the 70S ribosome it contacts protein S13 of the 30S subunit (bridge B1b), connecting the 2 subunits; this bridge is implicated in subunit movement. Contacts the P site tRNA; the 5S rRNA and some of its associated proteins might help stabilize positioning of ribosome-bound tRNAs. This is Large ribosomal subunit protein uL5 from Campylobacter hominis (strain ATCC BAA-381 / DSM 21671 / CCUG 45161 / LMG 19568 / NCTC 13146 / CH001A).